Reading from the N-terminus, the 89-residue chain is Small ribosomal subunit protein uS15 (89 aa).

The protein belongs to the universal ribosomal protein uS15 family. As to quaternary structure, part of the 30S ribosomal subunit. Forms a bridge to the 50S subunit in the 70S ribosome, contacting the 23S rRNA.

One of the primary rRNA binding proteins, it binds directly to 16S rRNA where it helps nucleate assembly of the platform of the 30S subunit by binding and bridging several RNA helices of the 16S rRNA. Its function is as follows. Forms an intersubunit bridge (bridge B4) with the 23S rRNA of the 50S subunit in the ribosome. In Hahella chejuensis (strain KCTC 2396), this protein is Small ribosomal subunit protein uS15.